The sequence spans 153 residues: MAANCERTFIAIKPDGVQRGLVGEIIKRFEQKGFRLVAMKFVHASEDLLKQHYIDLKDRPFYPGLVKYMNSGPVVAMVWEGLNVVKTGRVMLGETNPADSKPGTIRGDFCIQVGRNIIHGSDSVESAQKEISLWFKPAELIDYRSCAHDWVYE.

ATP contacts are provided by K13, F61, R89, T95, R106, and N116. H119 serves as the catalytic Pros-phosphohistidine intermediate.

Belongs to the NDK family. Mg(2+) is required as a cofactor.

It localises to the cytoplasm. Its subcellular location is the cell membrane. It catalyses the reaction a 2'-deoxyribonucleoside 5'-diphosphate + ATP = a 2'-deoxyribonucleoside 5'-triphosphate + ADP. The enzyme catalyses a ribonucleoside 5'-diphosphate + ATP = a ribonucleoside 5'-triphosphate + ADP. In terms of biological role, major role in the synthesis of nucleoside triphosphates other than ATP. The ATP gamma phosphate is transferred to the NDP beta phosphate via a ping-pong mechanism, using a phosphorylated active-site intermediate. This Gallus gallus (Chicken) protein is Nucleoside diphosphate kinase.